A 379-amino-acid polypeptide reads, in one-letter code: GPN-loop GTPase QQT2 (379 aa).

The residue at position 1 (methionine 1) is an N-acetylmethionine. Residue 51–56 coordinates GTP; sequence GSGKTS. The short motif at 108 to 110 is the Gly-Pro-Asn (GPN)-loop; involved in dimer interface element; sequence GPN. Residues 211-214 and alanine 267 each bind GTP; that span reads NKTD. A coiled-coil region spans residues 288–322; the sequence is METYKADLDMRKADKERLEEERKKHEMEKLRKDME. Basic and acidic residues-rich tracts occupy residues 303–322 and 335–346; these read ERLE…KDME and LKDRDATEKMML. The segment at 303-379 is disordered; that stretch reads ERLEEERKKH…EDDETKHYYL (77 aa). Acidic residues predominate over residues 347–372; it reads EEDDEDFQVEDEEDSDDAIDEDDEDD.

Belongs to the GPN-loop GTPase family. In terms of assembly, heterodimer with QQT1. As to expression, expressed in individual cells of roots, leaves and flowers.

The protein resides in the cytoplasm. It localises to the nucleus. It is found in the cytoskeleton. The protein localises to the spindle. Its subcellular location is the phragmoplast. In terms of biological role, small GTPase that is essential for the correct formation of the tangential divisions in early embryos. Associates with microtubule during mitosis and may function in the positioning of the division plane. May participate in the patterning of the early embryo at the octant-dermatogen transition. This chain is GPN-loop GTPase QQT2, found in Arabidopsis thaliana (Mouse-ear cress).